The primary structure comprises 359 residues: RNA-binding protein 4B (359 aa).

2 consecutive RRM domains span residues 2 to 72 (VKLF…ASKN) and 78 to 148 (TKLH…LSTS). The CCHC-type zinc-finger motif lies at 160 to 177 (SGCYRCGKEGHWSKECPV). Positions 196–359 (AVRTPYTMGY…YVDRARYSAF (164 aa)) are interaction with TNPO3.

As to quaternary structure, interacts with TNPO3, which may mediate nuclear import of the protein. Expressed in liver and kidney (at protein level). Ubiquitously expressed.

It is found in the nucleus. Its subcellular location is the nucleolus. Required for the translational activation of PER1 mRNA in response to circadian clock. Binds directly to the 3'-UTR of the PER1 mRNA. The sequence is that of RNA-binding protein 4B (RBM4B) from Homo sapiens (Human).